A 232-amino-acid polypeptide reads, in one-letter code: Enolase-phosphatase E1 (232 aa).

It belongs to the HAD-like hydrolase superfamily. MasA/MtnC family. Monomer. Mg(2+) serves as cofactor.

The catalysed reaction is 5-methylsulfanyl-2,3-dioxopentyl phosphate + H2O = 1,2-dihydroxy-5-(methylsulfanyl)pent-1-en-3-one + phosphate. It participates in amino-acid biosynthesis; L-methionine biosynthesis via salvage pathway; L-methionine from S-methyl-5-thio-alpha-D-ribose 1-phosphate: step 3/6. The protein operates within amino-acid biosynthesis; L-methionine biosynthesis via salvage pathway; L-methionine from S-methyl-5-thio-alpha-D-ribose 1-phosphate: step 4/6. Its function is as follows. Bifunctional enzyme that catalyzes the enolization of 2,3-diketo-5-methylthiopentyl-1-phosphate (DK-MTP-1-P) into the intermediate 2-hydroxy-3-keto-5-methylthiopentenyl-1-phosphate (HK-MTPenyl-1-P), which is then dephosphorylated to form the acireductone 1,2-dihydroxy-3-keto-5-methylthiopentene (DHK-MTPene). This is Enolase-phosphatase E1 from Xylella fastidiosa (strain 9a5c).